The following is a 1742-amino-acid chain: Meiosis regulator and mRNA stability factor 1 (1742 aa).

Residue serine 65 is modified to Phosphoserine. Positions isoleucine 351–isoleucine 488 constitute an NYN domain. Disordered stretches follow at residues proline 620–alanine 642 and serine 655–glutamate 721. Residues serine 631–alanine 642 show a composition bias toward polar residues. Over residues alanine 673–proline 689 the composition is skewed to low complexity. Tyrosine 696 is subject to Phosphotyrosine. The residue at position 757 (serine 757) is a Phosphoserine. The region spanning valine 788 to glycine 867 is the RRM domain. HTH OST-type domains follow at residues serine 872–glycine 946 and serine 1000–proline 1077. A phosphoserine mark is found at serine 1089 and serine 1091. 6 HTH OST-type domains span residues glutamine 1097 to arginine 1171, glutamine 1173 to arginine 1247, arginine 1257 to glutamate 1332, arginine 1333 to lysine 1408, serine 1409 to leucine 1484, and serine 1486 to aspartate 1560. Phosphoserine is present on serine 1571. Residues isoleucine 1678–lysine 1729 are disordered. Residues serine 1703–serine 1712 are compositionally biased toward low complexity.

As to quaternary structure, interacts with LIMK2.

It localises to the peroxisome. Its function is as follows. Essential regulator of oogenesis required for female meiotic progression to repress transposable elements and preventing their mobilization, which is essential for the germline integrity. Probably acts via some RNA metabolic process, equivalent to the piRNA system in males, which mediates the repression of transposable elements during meiosis by forming complexes composed of RNAs and governs the methylation and subsequent repression of transposons. Also required to protect from DNA double-strand breaks. This Bos taurus (Bovine) protein is Meiosis regulator and mRNA stability factor 1.